A 260-amino-acid chain; its full sequence is Serine hydroxymethyltransferase (260 aa).

N6-(pyridoxal phosphate)lysine is present on lysine 60.

This sequence belongs to the SHMT family. In terms of assembly, homodimer. Pyridoxal 5'-phosphate is required as a cofactor.

The protein localises to the cytoplasm. The catalysed reaction is (6R)-5,10-methylene-5,6,7,8-tetrahydrofolate + glycine + H2O = (6S)-5,6,7,8-tetrahydrofolate + L-serine. It functions in the pathway one-carbon metabolism; tetrahydrofolate interconversion. It participates in amino-acid biosynthesis; glycine biosynthesis; glycine from L-serine: step 1/1. Catalyzes the reversible interconversion of serine and glycine with tetrahydrofolate (THF) serving as the one-carbon carrier. This reaction serves as the major source of one-carbon groups required for the biosynthesis of purines, thymidylate, methionine, and other important biomolecules. Also exhibits THF-independent aldolase activity toward beta-hydroxyamino acids, producing glycine and aldehydes, via a retro-aldol mechanism. In Corynebacterium sp. (strain P-1), this protein is Serine hydroxymethyltransferase.